The primary structure comprises 212 residues: Thymidylate kinase (212 aa).

11 to 18 serves as a coordination point for ATP; it reads GPEGAGKT.

It belongs to the thymidylate kinase family.

The enzyme catalyses dTMP + ATP = dTDP + ADP. In terms of biological role, phosphorylation of dTMP to form dTDP in both de novo and salvage pathways of dTTP synthesis. In Streptococcus pneumoniae serotype 19F (strain G54), this protein is Thymidylate kinase.